Consider the following 243-residue polypeptide: uncharacterized protein (243 aa).

The disordered stretch occupies residues lysine 71–lysine 120. Basic residues predominate over residues arginine 78 to arginine 88. Serine 96 carries the post-translational modification Phosphoserine.

This is an uncharacterized protein from Saccharomyces cerevisiae (strain ATCC 204508 / S288c) (Baker's yeast).